Here is a 284-residue protein sequence, read N- to C-terminus: Proline-rich protein 32 (284 aa).

3 disordered regions span residues 59 to 80, 97 to 119, and 143 to 171; these read RPPF…APRH, EINS…NMSQ, and SGNN…RGPP.

This is Proline-rich protein 32 (Prr32) from Mus musculus (Mouse).